The primary structure comprises 523 residues: ATP-dependent RNA helicase DBP3 (523 aa).

Residues 1–21 show a composition bias toward basic and acidic residues; sequence MTKEEIADKKRKVVDEEVIEK. The tract at residues 1-71 is disordered; sequence MTKEEIADKK…SEKKPEPTSA (71 aa). The span at 22 to 48 shows a compositional bias: basic residues; sequence KKSKKHKKDKKDKKEKKDKKHKKHKKE. Positions 49–67 are enriched in basic and acidic residues; it reads KKGEKEVEVPEKESEKKPE. The short motif at 114–140 is the Q motif element; the sequence is LSFDYLSLDSSIQAEISKFPKPTPIQA. A Helicase ATP-binding domain is found at 143-315; sequence WPYLLSGKDV…STFMNNPIKV (173 aa). 156-163 contacts ATP; it reads AETGSGKT. The short motif at 262–265 is the DEAD box element; that stretch reads DEAD. Positions 344–493 constitute a Helicase C-terminal domain; it reads KLLELLKKYH…PVPEDLIKFG (150 aa).

It belongs to the DEAD box helicase family. DDX5/DBP2 subfamily.

The protein resides in the nucleus. Its subcellular location is the nucleolus. It catalyses the reaction ATP + H2O = ADP + phosphate + H(+). Its function is as follows. ATP-dependent RNA helicase required for 60S ribosomal subunit synthesis. Involved in efficient pre-rRNA processing, predominantly at site A3, which is necessary for the normal formation of 25S and 5.8S rRNAs. This is ATP-dependent RNA helicase DBP3 (DBP3) from Saccharomyces cerevisiae (strain ATCC 204508 / S288c) (Baker's yeast).